A 272-amino-acid polypeptide reads, in one-letter code: GEM-like protein 5 (272 aa).

The segment at 1-42 is disordered; it reads MTGSQEDQPKIIIDQEQPKTLETEHQPEPSSSSPDQKKWGTH. The span at 16–27 shows a compositional bias: basic and acidic residues; that stretch reads EQPKTLETEHQP. The GRAM domain maps to 143–221; that stretch reads SLFRQIFGTE…ANVATVNPVV (79 aa).

This sequence belongs to the GEM family.

In Arabidopsis thaliana (Mouse-ear cress), this protein is GEM-like protein 5.